We begin with the raw amino-acid sequence, 473 residues long: 3-isopropylmalate dehydratase large subunit (473 aa).

[4Fe-4S] cluster is bound by residues Cys351, Cys414, and Cys417.

Belongs to the aconitase/IPM isomerase family. LeuC type 1 subfamily. As to quaternary structure, heterodimer of LeuC and LeuD. The cofactor is [4Fe-4S] cluster.

It catalyses the reaction (2R,3S)-3-isopropylmalate = (2S)-2-isopropylmalate. It participates in amino-acid biosynthesis; L-leucine biosynthesis; L-leucine from 3-methyl-2-oxobutanoate: step 2/4. Functionally, catalyzes the isomerization between 2-isopropylmalate and 3-isopropylmalate, via the formation of 2-isopropylmaleate. This chain is 3-isopropylmalate dehydratase large subunit, found in Acidovorax ebreus (strain TPSY) (Diaphorobacter sp. (strain TPSY)).